The primary structure comprises 522 residues: Lysine--tRNA ligase (522 aa).

The short motif at 44 to 52 is the 'HIGH' region element; sequence PSGLPHIGT. Positions 290 to 294 match the 'KMSKS' region motif; that stretch reads KISKS. Residue lysine 293 coordinates ATP.

The protein belongs to the class-I aminoacyl-tRNA synthetase family.

The protein localises to the cytoplasm. The enzyme catalyses tRNA(Lys) + L-lysine + ATP = L-lysyl-tRNA(Lys) + AMP + diphosphate. The polypeptide is Lysine--tRNA ligase (Rickettsia peacockii (strain Rustic)).